Reading from the N-terminus, the 186-residue chain is Elongation factor P (186 aa).

The protein belongs to the elongation factor P family.

The protein resides in the cytoplasm. Its pathway is protein biosynthesis; polypeptide chain elongation. Functionally, involved in peptide bond synthesis. Stimulates efficient translation and peptide-bond synthesis on native or reconstituted 70S ribosomes in vitro. Probably functions indirectly by altering the affinity of the ribosome for aminoacyl-tRNA, thus increasing their reactivity as acceptors for peptidyl transferase. This Cupriavidus metallidurans (strain ATCC 43123 / DSM 2839 / NBRC 102507 / CH34) (Ralstonia metallidurans) protein is Elongation factor P.